Reading from the N-terminus, the 257-residue chain is MVLIRVLANLLILQLSYAQKSSELVVGGLPCNINEHRFLVLVYSDGIQCGGTLINKEWMLTAAHCDGKKMKLQFGLHSKNVPNKDKQTRVPKKKYFFPCSKNFTKWDKDIMLIRLNHPVNNSTHIAPLSLPSKPPSQDTVCNIMGWGTISPTKEIYPDVPHCAYINIVDHAVCRAFYPGLLEKSKTLCAGILEGGKDTCQGDSGGPLICNGQIQGIVSVGGDPCAEPRVSVLYTKVFDHLDWIKSIIAGNTAATCPL.

The N-terminal stretch at 1 to 18 is a signal peptide; the sequence is MVLIRVLANLLILQLSYA. Positions 19 to 24 are excised as a propeptide; sequence QKSSEL. Residues 25-248 form the Peptidase S1 domain; that stretch reads VVGGLPCNIN…HLDWIKSIIA (224 aa). 5 cysteine pairs are disulfide-bonded: Cys31–Cys162, Cys49–Cys65, Cys141–Cys209, Cys173–Cys188, and Cys199–Cys224. Residue His64 is the Charge relay system of the active site. N-linked (GlcNAc...) asparagine glycosylation is present at Asn102. Asp109 acts as the Charge relay system in catalysis. Residues Asn120 and Asn121 are each glycosylated (N-linked (GlcNAc...) asparagine). Ser203 functions as the Charge relay system in the catalytic mechanism.

The protein belongs to the peptidase S1 family. Snake venom subfamily. Monomer. As to expression, expressed by the venom gland.

It localises to the secreted. In terms of biological role, snake venom serine protease that may act in the hemostasis system of the prey. In Trimeresurus stejnegeri (Chinese green tree viper), this protein is Snake venom serine protease KN8.